The sequence spans 245 residues: U11/U12 small nuclear ribonucleoprotein 35 kDa protein (245 aa).

The 79-residue stretch at 51-129 (LTLFVARLNL…HEIFVDYELE (79 aa)) folds into the RRM domain. Residues 146-162 (GKKESGQLRFGGRDRPF) are compositionally biased toward basic and acidic residues. The tract at residues 146-165 (GKKESGQLRFGGRDRPFRKP) is disordered. Lysine 172 is covalently cross-linked (Glycyl lysine isopeptide (Lys-Gly) (interchain with G-Cter in SUMO2)). Positions 173-222 (NDQFREGKRERRERSRSRERHWDSRMRDHHDRGREKRWQEREPARAWPEG) are disordered. 2 stretches are compositionally biased toward basic and acidic residues: residues 174 to 185 (DQFREGKRERRE) and 192 to 216 (RHWD…REPA).

Component of the U11/U12 snRNPs that are part of the U12-type spliceosome.

It is found in the nucleus. The polypeptide is U11/U12 small nuclear ribonucleoprotein 35 kDa protein (SNRNP35) (Bos taurus (Bovine)).